Here is a 594-residue protein sequence, read N- to C-terminus: Keratin, type II cytoskeletal 2 oral (594 aa).

The interval 1-164 is head; sequence MSRQACKKSF…DPQIGQVKAQ (164 aa). 2 positions are modified to omega-N-methylarginine: arginine 85 and arginine 104. Positions 165 to 200 are coil 1A; sequence EREQIKTLNNKFASFIDKVRFLEQQNKVLETKWELL. Residues 165-480 enclose the IF rod domain; that stretch reads EREQIKTLNN…KLLEGEECRL (316 aa). Residues 201 to 221 are linker 1; it reads QQQTIRSGSGPQNLEPFFESY. Residues 222–313 are coil 1B; sequence ISCLRKQLDS…TLYDMELSQI (92 aa). The interval 314 to 337 is linker 12; it reads QSHVSDTSVVLSMDNNRCLDLDSI. The tract at residues 338-476 is coil 2; sequence IAEVKAQYED…ATYRKLLEGE (139 aa). Positions 477–594 are tail; it reads ECRLSGEFQN…TTSSSQQRSK (118 aa). Positions 497–594 are disordered; sequence TSTSSSGSFR…TTSSSQQRSK (98 aa). Positions 506 to 522 are enriched in gly residues; it reads RGTGGSNYGGDSSGRSG. The span at 523–551 shows a compositional bias: low complexity; it reads GSSSSSSRGSSSRGSSGSRLGSGGSISVS. At arginine 541 the chain carries Omega-N-methylarginine. Polar residues predominate over residues 552-564; the sequence is QQRMGFNSGGSQT. Residues 565–594 are compositionally biased toward low complexity; sequence SVGSSYKSGRGGSSSVQFSQTTSSSQQRSK.

It belongs to the intermediate filament family. In terms of assembly, heterotetramer of two type I and two type II keratins.

Its function is as follows. Probably contributes to terminal cornification. The polypeptide is Keratin, type II cytoskeletal 2 oral (Mus musculus (Mouse)).